Consider the following 601-residue polypeptide: Elongation factor 4 (601 aa).

Residues 6-188 form the tr-type G domain; it reads QFIRNFSIIA…AITKEIPAPK (183 aa). GTP contacts are provided by residues 18–23 and 135–138; these read DHGKST and NKID.

The protein belongs to the TRAFAC class translation factor GTPase superfamily. Classic translation factor GTPase family. LepA subfamily.

The protein resides in the cell inner membrane. The enzyme catalyses GTP + H2O = GDP + phosphate + H(+). Functionally, required for accurate and efficient protein synthesis under certain stress conditions. May act as a fidelity factor of the translation reaction, by catalyzing a one-codon backward translocation of tRNAs on improperly translocated ribosomes. Back-translocation proceeds from a post-translocation (POST) complex to a pre-translocation (PRE) complex, thus giving elongation factor G a second chance to translocate the tRNAs correctly. Binds to ribosomes in a GTP-dependent manner. The sequence is that of Elongation factor 4 from Leptospira borgpetersenii serovar Hardjo-bovis (strain JB197).